We begin with the raw amino-acid sequence, 944 residues long: Serine/threonine-protein kinase PLK4 (944 aa).

The Protein kinase domain occupies 12 to 265; it reads FKVLNLLGKG…LSSVLDHAFM (254 aa). Residues 18 to 26 and Lys41 contribute to the ATP site; that span reads LGKGSFACV. Asp136 acts as the Proton acceptor in catalysis. Disordered stretches follow at residues 327–396, 432–463, and 530–561; these read KDKH…YSER, RSLE…RSND, and LGIK…QQAF. Positions 378–394 are enriched in polar residues; the sequence is RSGTSQSQTYAKPSSYS. Positions 432 to 447 are enriched in basic and acidic residues; it reads RSLERHTSPPVKEKTP. The span at 548–561 shows a compositional bias: polar residues; the sequence is FGEQSKSRVPQQAF. The Cryptic POLO box 1 (CPB1) domain maps to 565 to 678; sequence TLRSIISPLN…AKFIKLVRSK (114 aa). A Cryptic POLO box 2 (CPB2) domain is found at 679–791; that stretch reads TPKVTYYTRY…GRRPALAESP (113 aa). Residues 786–809 form a disordered region; it reads ALAESPKTQPTPSVDSARERKEEQ. The POLO box domain occupies 862–940; that stretch reads QVLKSVFVEN…LSSILMLFAS (79 aa).

Belongs to the protein kinase superfamily. Ser/Thr protein kinase family. CDC5/Polo subfamily. In terms of assembly, homodimer. Ubiquitinated; leading to its degradation by the proteasome.

It is found in the cytoplasm. The protein resides in the cytoskeleton. Its subcellular location is the microtubule organizing center. It localises to the centrosome. The protein localises to the centriole. It catalyses the reaction L-seryl-[protein] + ATP = O-phospho-L-seryl-[protein] + ADP + H(+). The enzyme catalyses L-threonyl-[protein] + ATP = O-phospho-L-threonyl-[protein] + ADP + H(+). In terms of biological role, serine/threonine-protein kinase that plays a central role in centriole duplication. Able to trigger procentriole formation on the surface of the parental centriole cylinder, leading to the recruitment of centriole biogenesis proteins such as sass6, cpap, ccp110, cep135 and gamma-tubulin. When overexpressed, it is able to induce centrosome amplification through the simultaneous generation of multiple procentrioles adjoining each parental centriole during S phase. Its central role in centriole replication suggests a possible role in tumorigenesis, centrosome aberrations being frequently observed in tumors. Also involved in deuterosome-mediated centriole amplification in multiciliated that can generate more than 100 centrioles. The protein is Serine/threonine-protein kinase PLK4 of Xenopus laevis (African clawed frog).